A 473-amino-acid chain; its full sequence is Membrane protein TMS1 (473 aa).

Over 1–6 (MGAVIS) the chain is Cytoplasmic. A helical membrane pass occupies residues 7–29 (LPVSMAGSFVASCFGGCCSNLVT). Topologically, residues 30-38 (KTASSLGSS) are vacuolar. The chain crosses the membrane as a helical span at residues 39 to 61 (SLGTRLLYAVWLLLNSLISWVSY). At 62 to 81 (SANKSILWPGKTCTGTGECG) the chain is on the cytoplasmic side. The chain crosses the membrane as a helical span at residues 82-104 (FFTVHRLNFALGCLHLILALVLT). Topologically, residues 105–118 (GVKSTNDVRAALQN) are vacuolar. Residues 119–138 (SWWSLKFILYLCLIVLSFVI) form a helical membrane-spanning segment. Residues 139–144 (PNDFYI) lie on the Cytoplasmic side of the membrane. The chain crosses the membrane as a helical span at residues 145-167 (FFSKWVSVPSGAIFILVGLILLV). Over 168-194 (DFAHEWAETCISHVESEDEDSSFWQRF) the chain is Vacuolar. The chain crosses the membrane as a helical span at residues 195-217 (LVLGTTSMYTASIIMTVVMYVMF). The Cytoplasmic segment spans residues 218–228 (CHQQCNMNQTA). A helical transmembrane segment spans residues 229–246 (VTVNLILTVITLVLSVNP). At 247 to 295 (KIQEANPKSGLAQSSMVSVYCTYLTMSAMSSEPDDKMCNPLVRSSGTRK) the chain is on the vacuolar side. The helical transmembrane segment at 296-318 (FSIILGSLFTFIAIAYTTTRAAA) threads the bilayer. The Cytoplasmic segment spans residues 319–398 (NSAFQGTNTN…DDERTGTKYN (80 aa)). The chain crosses the membrane as a helical span at residues 399 to 421 (YTLFHVIFFLATQWIAILLTINV). Over 422–435 (TQDDVGDFIPVGRT) the chain is Vacuolar. Residues 436-458 (YFYSWVKIVSAWICYALYGWTVV) form a helical membrane-spanning segment. Residues 459-473 (APAIMPDRFDYENYY) lie on the Cytoplasmic side of the membrane.

Belongs to the TDE1 family.

The protein localises to the membrane. This chain is Membrane protein TMS1 (TMS1), found in Saccharomyces cerevisiae (strain ATCC 204508 / S288c) (Baker's yeast).